We begin with the raw amino-acid sequence, 851 residues long: Receptor like protein kinase S.2 (851 aa).

The region spanning 117-436 is the Protein kinase 1 domain; the sequence is FSDELILGSG…LPSFKSHPLY (320 aa). Residues 123-131 and K146 contribute to the ATP site; that span reads LGSGGFGRV. D248 serves as the catalytic Proton acceptor. The disordered stretch occupies residues 448–471; sequence SATTTTTRTTMTTTTSTTSFNASS. In terms of domain architecture, Protein kinase 2 spans 532-819; the sequence is FSDARRVAEV…SILDGSERFF (288 aa). ATP contacts are provided by residues 538–546 and K560; that span reads VAEVDFGTA.

This sequence belongs to the protein kinase superfamily. Ser/Thr protein kinase family.

The enzyme catalyses L-seryl-[protein] + ATP = O-phospho-L-seryl-[protein] + ADP + H(+). It catalyses the reaction L-threonyl-[protein] + ATP = O-phospho-L-threonyl-[protein] + ADP + H(+). This chain is Receptor like protein kinase S.2 (LECRKS2), found in Arabidopsis thaliana (Mouse-ear cress).